The sequence spans 109 residues: Large ribosomal subunit protein P1C (109 aa).

Positions Ala-68 to Glu-83 are enriched in low complexity. Residues Ala-68–Asp-109 form a disordered region. Over residues Lys-94 to Met-103 the composition is skewed to acidic residues. Residue Ser-99 is modified to Phosphoserine.

The protein belongs to the eukaryotic ribosomal protein P1/P2 family. In terms of assembly, component of the large ribosomal subunit (LSU). Mature yeast ribosomes consist of a small (40S) and a large (60S) subunit. The 40S small subunit contains 1 molecule of ribosomal RNA (18S rRNA) and at least 33 different proteins. The large 60S subunit contains 3 rRNA molecules (25S, 5.8S and 5S rRNA) and at least 46 different proteins. The acidic ribosomal P-proteins form the stalk structure of the 60S subunit. They are organized as a pentameric complex in which uL10/P0 interacts with 2 heterodimers of P1 and P2 proteins.

The protein localises to the cytoplasm. Functionally, component of the ribosome, a large ribonucleoprotein complex responsible for the synthesis of proteins in the cell. The small ribosomal subunit (SSU) binds messenger RNAs (mRNAs) and translates the encoded message by selecting cognate aminoacyl-transfer RNA (tRNA) molecules. The large subunit (LSU) contains the ribosomal catalytic site termed the peptidyl transferase center (PTC), which catalyzes the formation of peptide bonds, thereby polymerizing the amino acids delivered by tRNAs into a polypeptide chain. The nascent polypeptides leave the ribosome through a tunnel in the LSU and interact with protein factors that function in enzymatic processing, targeting, and the membrane insertion of nascent chains at the exit of the ribosomal tunnel. This is Large ribosomal subunit protein P1C (rpp103) from Schizosaccharomyces pombe (strain 972 / ATCC 24843) (Fission yeast).